The primary structure comprises 205 residues: Peptidyl-tRNA hydrolase (205 aa).

A tRNA-binding site is contributed by Tyr17. Catalysis depends on His22, which acts as the Proton acceptor. 2 residues coordinate tRNA: Tyr73 and Asn75.

It belongs to the PTH family. As to quaternary structure, monomer.

It localises to the cytoplasm. The catalysed reaction is an N-acyl-L-alpha-aminoacyl-tRNA + H2O = an N-acyl-L-amino acid + a tRNA + H(+). Hydrolyzes ribosome-free peptidyl-tRNAs (with 1 or more amino acids incorporated), which drop off the ribosome during protein synthesis, or as a result of ribosome stalling. Functionally, catalyzes the release of premature peptidyl moieties from peptidyl-tRNA molecules trapped in stalled 50S ribosomal subunits, and thus maintains levels of free tRNAs and 50S ribosomes. This chain is Peptidyl-tRNA hydrolase, found in Maridesulfovibrio salexigens (strain ATCC 14822 / DSM 2638 / NCIMB 8403 / VKM B-1763) (Desulfovibrio salexigens).